A 477-amino-acid chain; its full sequence is Bile acid transporter (477 aa).

15 helical membrane-spanning segments follow: residues 13 to 33 (FVPF…TAVL), 50 to 70 (WISL…GKLG), 83 to 103 (IVIF…IFML), 107 to 127 (FIVG…IVTE), 139 to 159 (LYML…GLIM), 166 to 186 (VMMW…TFSI), 206 to 226 (LVVV…NIGW), 228 to 248 (STAF…LVMV), 272 to 292 (LILF…IVFV), 301 to 321 (IISS…SVII), 333 to 353 (VLTF…LFKA), 359 to 379 (IFAA…TIFM), 381 to 401 (VALS…YGLF), 406 to 426 (APFG…ANIA), and 444 to 464 (ISSI…GIIL).

Belongs to the major facilitator superfamily.

The protein localises to the cell membrane. It functions in the pathway lipid metabolism; bile acid degradation. In Clostridium scindens (strain JCM 10418 / VPI 12708), this protein is Bile acid transporter (baiG).